Here is a 224-residue protein sequence, read N- to C-terminus: Ribose-5-phosphate isomerase A (224 aa).

Residues 26-29 (TGST), 81-84 (DGAD), and 94-97 (KGGG) each bind substrate. Residue Glu103 is the Proton acceptor of the active site. Lys121 contacts substrate.

Belongs to the ribose 5-phosphate isomerase family. As to quaternary structure, homodimer.

It carries out the reaction aldehydo-D-ribose 5-phosphate = D-ribulose 5-phosphate. It participates in carbohydrate degradation; pentose phosphate pathway; D-ribose 5-phosphate from D-ribulose 5-phosphate (non-oxidative stage): step 1/1. Catalyzes the reversible conversion of ribose-5-phosphate to ribulose 5-phosphate. This chain is Ribose-5-phosphate isomerase A, found in Listeria monocytogenes serotype 4b (strain CLIP80459).